Reading from the N-terminus, the 275-residue chain is Dermonecrotic toxin LspiSicTox-betaIE4i (275 aa).

Mg(2+)-binding residues include Glu24 and Asp26. His40 functions as the Nucleophile in the catalytic mechanism. 2 cysteine pairs are disulfide-bonded: Cys44–Cys50 and Cys46–Cys188. Asp84 contributes to the Mg(2+) binding site.

It belongs to the arthropod phospholipase D family. Class II subfamily. It depends on Mg(2+) as a cofactor. Expressed by the venom gland.

The protein resides in the secreted. The catalysed reaction is an N-(acyl)-sphingosylphosphocholine = an N-(acyl)-sphingosyl-1,3-cyclic phosphate + choline. It carries out the reaction an N-(acyl)-sphingosylphosphoethanolamine = an N-(acyl)-sphingosyl-1,3-cyclic phosphate + ethanolamine. It catalyses the reaction a 1-acyl-sn-glycero-3-phosphocholine = a 1-acyl-sn-glycero-2,3-cyclic phosphate + choline. The enzyme catalyses a 1-acyl-sn-glycero-3-phosphoethanolamine = a 1-acyl-sn-glycero-2,3-cyclic phosphate + ethanolamine. Functionally, dermonecrotic toxins cleave the phosphodiester linkage between the phosphate and headgroup of certain phospholipids (sphingolipid and lysolipid substrates), forming an alcohol (often choline) and a cyclic phosphate. This toxin acts on sphingomyelin (SM). It may also act on ceramide phosphoethanolamine (CPE), lysophosphatidylcholine (LPC) and lysophosphatidylethanolamine (LPE), but not on lysophosphatidylserine (LPS), and lysophosphatidylglycerol (LPG). It acts by transphosphatidylation, releasing exclusively cyclic phosphate products as second products. Induces dermonecrosis, hemolysis, increased vascular permeability, edema, inflammatory response, and platelet aggregation. In Loxosceles spinulosa (Recluse spider), this protein is Dermonecrotic toxin LspiSicTox-betaIE4i.